The chain runs to 424 residues: Calreticulin-2 (424 aa).

Residues 1-22 (MAKMIPSLVSLILIGLVAIASA) form the signal peptide. A glycan (N-linked (GlcNAc...) asparagine) is linked at Asn-59. Cys-108 and Cys-140 are joined by a disulfide. Residues Tyr-112, Lys-114, Tyr-131, and Asp-138 each contribute to the an alpha-D-glucoside site. 7 repeat units span residues 194–205 (KQTGSLYSDWDL), 213–224 (DPSAKKPEDWDE), 230–241 (DPEDKKPDGYDD), 248–259 (DTDSKKPEDWDD), 263–273 (GEWTAPTIPNP), 277–287 (GEWKPKQIKNP), and 291–301 (GKWEAPLIDNP). The 4 X approximate repeats stretch occupies residues 194–259 (KQTGSLYSDW…DSKKPEDWDD (66 aa)). The segment covering 210-220 (KIKDPSAKKPE) has biased composition (basic and acidic residues). Positions 210-279 (KIKDPSAKKP…IPNPEYMGEW (70 aa)) are disordered. A compositionally biased stretch (acidic residues) spans 221–230 (DWDEQEYISD). The span at 231–255 (PEDKKPDGYDDIPKEIPDTDSKKPE) shows a compositional bias: basic and acidic residues. A 3 X approximate repeats region spans residues 263–301 (GEWTAPTIPNPEYMGEWKPKQIKNPNYKGKWEAPLIDNP). An alpha-D-glucoside is bound at residue Glu-321. Residues 362–378 (FDEAEKKNEEEESKDAP) are compositionally biased toward basic and acidic residues. Positions 362 to 424 (FDEAEKKNEE…EKDATAHDEL (63 aa)) are disordered. Over residues 379 to 397 (AESDAEDEPEDDEGGDDSD) the composition is skewed to acidic residues. 2 positions are modified to phosphoserine: Ser-381 and Ser-396. Basic and acidic residues predominate over residues 398–424 (SESKAEETKSVDSEETSEKDATAHDEL). The Prevents secretion from ER signature appears at 421–424 (HDEL).

The protein belongs to the calreticulin family.

Its subcellular location is the endoplasmic reticulum lumen. Its function is as follows. Molecular calcium-binding chaperone promoting folding, oligomeric assembly and quality control in the ER via the calreticulin/calnexin cycle. This lectin may interact transiently with almost all of the monoglucosylated glycoproteins that are synthesized in the ER. In Arabidopsis thaliana (Mouse-ear cress), this protein is Calreticulin-2 (CRT2).